Consider the following 344-residue polypeptide: Heat-inducible transcription repressor HrcA (344 aa).

This sequence belongs to the HrcA family.

In terms of biological role, negative regulator of class I heat shock genes (grpE-dnaK-dnaJ and groELS operons). Prevents heat-shock induction of these operons. The protein is Heat-inducible transcription repressor HrcA of Streptococcus pneumoniae (strain ATCC 700669 / Spain 23F-1).